A 359-amino-acid polypeptide reads, in one-letter code: E3 ubiquitin-protein ligase RNF146 (359 aa).

The RING-type zinc finger occupies Cys-37–Arg-75. Residues Lys-85 and Lys-95 each participate in a glycyl lysine isopeptide (Lys-Gly) (interchain with G-Cter in ubiquitin) cross-link. A WWE domain is found at Glu-92–Arg-168. 3 residues coordinate a glycoprotein: Tyr-108, Arg-111, and Trp-115. Residue Lys-131 forms a Glycyl lysine isopeptide (Lys-Gly) (interchain with G-Cter in ubiquitin) linkage. Residues Tyr-145, Gln-154, Arg-164, and Lys-176 each coordinate a glycoprotein. Lys-176 is covalently cross-linked (Glycyl lysine isopeptide (Lys-Gly) (interchain with G-Cter in ubiquitin)). Positions Gly-254 to Val-359 are disordered. Over residues Ser-284 to Asp-298 the composition is skewed to acidic residues. Phosphoserine occurs at positions 290 and 294. The span at His-306 to Pro-323 shows a compositional bias: polar residues.

As to quaternary structure, can form homooligomers. Interacts with PARsylated AXIN1, AXIN2, BLZF1, CASC3, H1-2, IPO7, LIG3, NCL, PARP1, XRCC1, XRCC5 and XRCC6. Interacts with DDB1, DHX15, IQGAP1, LRPPRC, PARP2, PRKDC, RUVBL2, TNKS1 and TNKS2. Binding often leads to interactor ubiquitination, in the presence of the appropriate E1 and E2 enzymes, and proteasomal degradation. Ubiquitinated; autoubiquitinated. Polyubiquitinated in the presence of UBE2D1, UBE2D2 and UBE2D3. Multimonoubiquitinated in the presence of UBE2E1. Not ubiquitinated in the presence of UBE2H, CDC34, UBE2L3, UBE2L6, nor UBE2C. In the absence of PAR, autoubiquitination occurs on Lys-85, Lys-95 and Lys-176 via 'Lys-11' and 'Lys-48' ubiquitin linkages. In the presence of PAR, Lys-131 and Lys-176 are ubiquitinated via 'Lys-6', 'Lys-33' and 'Lys-48' ubiquitin linkages. Autoubiquitination is enhanced upon PAR-binding. Ubiquitously expressed. Up-regulated in brains from patients with Alzheimer disease.

It is found in the cytoplasm. It localises to the cytosol. The protein localises to the nucleus. The enzyme catalyses S-ubiquitinyl-[E2 ubiquitin-conjugating enzyme]-L-cysteine + [acceptor protein]-L-lysine = [E2 ubiquitin-conjugating enzyme]-L-cysteine + N(6)-ubiquitinyl-[acceptor protein]-L-lysine.. The protein operates within protein modification; protein ubiquitination. E3 ubiquitin-protein ligase that specifically binds poly-ADP-ribosylated (PARsylated) proteins and mediates their ubiquitination and subsequent degradation. May regulate many important biological processes, such as cell survival and DNA damage response. Acts as an activator of the Wnt signaling pathway by mediating the ubiquitination of PARsylated AXIN1 and AXIN2, 2 key components of the beta-catenin destruction complex. Acts in cooperation with tankyrase proteins (TNKS and TNKS2), which mediate PARsylation of target proteins AXIN1, AXIN2, BLZF1, CASC3, TNKS and TNKS2. Recognizes and binds tankyrase-dependent PARsylated proteins via its WWE domain and mediates their ubiquitination, leading to their degradation. Different ubiquitin linkage types have been observed: TNKS2 undergoes ubiquitination at 'Lys-48' and 'Lys-63', while AXIN1 is only ubiquitinated at 'Lys-48'. May regulate TNKS and TNKS2 subcellular location, preventing aggregation at a centrosomal location. Neuroprotective protein. Protects the brain against N-methyl-D-aspartate (NMDA) receptor-mediated glutamate excitotoxicity and ischemia, by interfering with PAR-induced cell death, called parthanatos. Prevents nuclear translocation of AIFM1 in a PAR-binding dependent manner. Does not affect PARP1 activation. Protects against cell death induced by DNA damaging agents, such as N-methyl-N-nitro-N-nitrosoguanidine (MNNG) and rescues cells from G1 arrest. Promotes cell survival after gamma-irradiation. Facilitates DNA repair. This is E3 ubiquitin-protein ligase RNF146 (RNF146) from Homo sapiens (Human).